Reading from the N-terminus, the 151-residue chain is Lipoprotein signal peptidase (151 aa).

3 helical membrane passes run 3–23 (LYII…GWIV), 59–79 (WFFY…FYTS), and 85–107 (LYRI…RLHL). Active-site residues include Asp-112 and Asp-128. Residues 123 to 143 (IFNVADTALTCGVICVFIAIL) form a helical membrane-spanning segment.

The protein belongs to the peptidase A8 family.

It localises to the cell membrane. It catalyses the reaction Release of signal peptides from bacterial membrane prolipoproteins. Hydrolyzes -Xaa-Yaa-Zaa-|-(S,diacylglyceryl)Cys-, in which Xaa is hydrophobic (preferably Leu), and Yaa (Ala or Ser) and Zaa (Gly or Ala) have small, neutral side chains.. The protein operates within protein modification; lipoprotein biosynthesis (signal peptide cleavage). Its function is as follows. This protein specifically catalyzes the removal of signal peptides from prolipoproteins. In Latilactobacillus sakei subsp. sakei (strain 23K) (Lactobacillus sakei subsp. sakei), this protein is Lipoprotein signal peptidase.